Reading from the N-terminus, the 208-residue chain is NAD-dependent protein deacylase (208 aa).

In terms of domain architecture, Deacetylase sirtuin-type spans 1 to 208 (MKPICVVLSG…NTGFNPVTGW (208 aa)). 10-29 (GAGISAESGIPTYRAEDGLW) lines the NAD(+) pocket. 2 residues coordinate substrate: tyrosine 54 and arginine 57. NAD(+) is bound at residue 87–90 (QNVE). Residue histidine 105 is the Proton acceptor of the active site. Residues 170–172 (GTS) and 197–199 (NPN) each bind NAD(+).

The protein belongs to the sirtuin family. Class III subfamily.

Its subcellular location is the cytoplasm. It catalyses the reaction N(6)-acetyl-L-lysyl-[protein] + NAD(+) + H2O = 2''-O-acetyl-ADP-D-ribose + nicotinamide + L-lysyl-[protein]. The enzyme catalyses N(6)-succinyl-L-lysyl-[protein] + NAD(+) + H2O = 2''-O-succinyl-ADP-D-ribose + nicotinamide + L-lysyl-[protein]. Its function is as follows. NAD-dependent lysine deacetylase and desuccinylase that specifically removes acetyl and succinyl groups on target proteins. Modulates the activities of several proteins which are inactive in their acylated form. The protein is NAD-dependent protein deacylase of Aggregatibacter actinomycetemcomitans (Actinobacillus actinomycetemcomitans).